The chain runs to 382 residues: D-alanine--D-alanine ligase (382 aa).

The ATP-grasp domain maps to lysine 161 to tyrosine 372. Valine 193–glutamate 248 serves as a coordination point for ATP. Residues aspartate 326, glutamate 339, and asparagine 341 each contribute to the Mg(2+) site.

The protein belongs to the D-alanine--D-alanine ligase family. It depends on Mg(2+) as a cofactor. Requires Mn(2+) as cofactor.

The protein resides in the cytoplasm. The catalysed reaction is 2 D-alanine + ATP = D-alanyl-D-alanine + ADP + phosphate + H(+). Its pathway is cell wall biogenesis; peptidoglycan biosynthesis. Cell wall formation. This chain is D-alanine--D-alanine ligase, found in Arthrobacter sp. (strain FB24).